Consider the following 215-residue polypeptide: UPF0502 protein CKO_01995 (215 aa).

This sequence belongs to the UPF0502 family.

This is UPF0502 protein CKO_01995 from Citrobacter koseri (strain ATCC BAA-895 / CDC 4225-83 / SGSC4696).